Reading from the N-terminus, the 312-residue chain is Pantothenate kinase (312 aa).

97–104 (GSVAVGKS) serves as a coordination point for ATP.

This sequence belongs to the prokaryotic pantothenate kinase family.

The protein localises to the cytoplasm. It catalyses the reaction (R)-pantothenate + ATP = (R)-4'-phosphopantothenate + ADP + H(+). It participates in cofactor biosynthesis; coenzyme A biosynthesis; CoA from (R)-pantothenate: step 1/5. In Mycobacterium sp. (strain JLS), this protein is Pantothenate kinase.